We begin with the raw amino-acid sequence, 268 residues long: UPF0328 protein ECU09_2030 (268 aa).

Belongs to the UPF0328 family.

In Encephalitozoon cuniculi (strain GB-M1) (Microsporidian parasite), this protein is UPF0328 protein ECU09_2030.